The chain runs to 307 residues: Ribosomal RNA small subunit methyltransferase A (307 aa).

S-adenosyl-L-methionine-binding residues include Asn35, Val37, Gly62, Glu83, Asp113, and Asn136.

The protein belongs to the class I-like SAM-binding methyltransferase superfamily. rRNA adenine N(6)-methyltransferase family. RsmA subfamily.

Its subcellular location is the cytoplasm. The catalysed reaction is adenosine(1518)/adenosine(1519) in 16S rRNA + 4 S-adenosyl-L-methionine = N(6)-dimethyladenosine(1518)/N(6)-dimethyladenosine(1519) in 16S rRNA + 4 S-adenosyl-L-homocysteine + 4 H(+). Specifically dimethylates two adjacent adenosines (A1518 and A1519) in the loop of a conserved hairpin near the 3'-end of 16S rRNA in the 30S particle. May play a critical role in biogenesis of 30S subunits. In Bifidobacterium longum (strain DJO10A), this protein is Ribosomal RNA small subunit methyltransferase A.